We begin with the raw amino-acid sequence, 413 residues long: Zona pellucida-like domain-containing protein 1 (413 aa).

Residues 1-19 (MEQICLIILLISKALSVGA) form the signal peptide. At glutamine 20 the chain carries Pyrrolidone carboxylic acid. Residues 20–370 (QFNGYNCDAN…PVFRMNTVTS (351 aa)) are Extracellular-facing. Residues 43–320 (YCGVQTITLK…PICGSRKKRD (278 aa)) form the ZP domain. 2 disulfides stabilise this stretch: cysteine 44-cysteine 155 and cysteine 79-cysteine 104. Residues asparagine 85, asparagine 121, asparagine 129, asparagine 164, asparagine 181, and asparagine 194 are each glycosylated (N-linked (GlcNAc...) asparagine). Disulfide bonds link cysteine 235–cysteine 296 and cysteine 255–cysteine 313. A glycan (N-linked (GlcNAc...) asparagine) is linked at asparagine 351. Residues 371-391 (ALISGIIILGVMSLCFFILSL) traverse the membrane as a helical segment. The Cytoplasmic portion of the chain corresponds to 392–413 (TLLKGKRAPPTILSGARNPAFN).

Proteolytically cleaved before the transmembrane segment to yield the secreted form found in the extracellular matrix of the cupula. In terms of processing, N-glycosylated. Detected in the acellular cupulae of the vestibular organ, and also in support cells adjacent to the cupula (at protein level).

It localises to the cytoplasmic vesicle membrane. Its subcellular location is the secreted. The protein resides in the extracellular space. It is found in the extracellular matrix. Its function is as follows. Glycoprotein which is a component of the gelatinous extracellular matrix in the cupulae of the vestibular organ. The sequence is that of Zona pellucida-like domain-containing protein 1 from Salmo salar (Atlantic salmon).